A 157-amino-acid polypeptide reads, in one-letter code: SsrA-binding protein (157 aa).

The protein belongs to the SmpB family.

The protein resides in the cytoplasm. In terms of biological role, required for rescue of stalled ribosomes mediated by trans-translation. Binds to transfer-messenger RNA (tmRNA), required for stable association of tmRNA with ribosomes. tmRNA and SmpB together mimic tRNA shape, replacing the anticodon stem-loop with SmpB. tmRNA is encoded by the ssrA gene; the 2 termini fold to resemble tRNA(Ala) and it encodes a 'tag peptide', a short internal open reading frame. During trans-translation Ala-aminoacylated tmRNA acts like a tRNA, entering the A-site of stalled ribosomes, displacing the stalled mRNA. The ribosome then switches to translate the ORF on the tmRNA; the nascent peptide is terminated with the 'tag peptide' encoded by the tmRNA and targeted for degradation. The ribosome is freed to recommence translation, which seems to be the essential function of trans-translation. The chain is SsrA-binding protein from Chlorobium phaeovibrioides (strain DSM 265 / 1930) (Prosthecochloris vibrioformis (strain DSM 265)).